A 352-amino-acid chain; its full sequence is MKSEQLKQFERYAEAVGAERYRVTSIKMQADGRKQTFILDKKDGITRGFTPQEIEQRTPEMQRLQRRGENLYYTPLSDKKHHILIDDMNREKLERLIKDGYQPAAVLESSPGNYQAIITVSKLGTAHDKDVGNRLSDALNREYGDPKLSGAIHPHRAPGYENRKPKHQREDGSYPEVRLLKAERRECVKALALSSQIDAEYQRQAALKAQQPERTKAKPALELAAASGSAIDAYQRHYRDVLKRQRGGEVDLSRVDSMIAVRMRVTGHDQAAIEGAIRQCAPATRQKDEGRDWNDYAQRTARYAYSAAQPQAADLGKYRQQWEKLEGREPVRQQEQAKAQKIERDNSPGMSL.

Disordered regions lie at residues 145–172 (DPKLSGAIHPHRAPGYENRKPKHQREDG) and 318–352 (YRQQWEKLEGREPVRQQEQAKAQKIERDNSPGMSL). Residues 318-332 (YRQQWEKLEGREPVR) are compositionally biased toward basic and acidic residues.

Functions as a primase with respect to replication at the (vegetative) origin of replication of pTF-FC2. This is DNA primase (repB) from Acidithiobacillus ferrooxidans (Thiobacillus ferrooxidans).